A 704-amino-acid chain; its full sequence is Probable serine/threonine-protein kinase WNK1 (704 aa).

The Protein kinase domain maps to 27 to 284 (GRYNDVLGKG…ARELLKDPFL (258 aa)). ATP contacts are provided by residues 107–110 (TEMF) and lysine 157. Aspartate 174 (proton acceptor) is an active-site residue. The disordered stretch occupies residues 499 to 521 (QTDLQDSGGSSDDGGGQTQHVKD).

The protein belongs to the protein kinase superfamily. Ser/Thr protein kinase family. WNK subfamily.

The catalysed reaction is L-seryl-[protein] + ATP = O-phospho-L-seryl-[protein] + ADP + H(+). The enzyme catalyses L-threonyl-[protein] + ATP = O-phospho-L-threonyl-[protein] + ADP + H(+). The polypeptide is Probable serine/threonine-protein kinase WNK1 (WNK1) (Oryza sativa subsp. japonica (Rice)).